The following is a 299-amino-acid chain: Fibrinogen silencer-binding protein (299 aa).

A Glycyl lysine isopeptide (Lys-Gly) (interchain with G-Cter in SUMO2) cross-link involves residue Lys94. The interval 189 to 211 (EGSESPSLSSVDMRMTSSPSSVP) is disordered. The segment covering 192–209 (ESPSLSSVDMRMTSSPSS) has biased composition (polar residues).

As to quaternary structure, interacts with APBA1 (via PDZ 1 and 2 domains).

Its subcellular location is the nucleus. Transcriptional repressor that down-regulates the expression of the fibrinogen gamma chain. Represses transcription of GSK3B gene promoter via its interaction with APBA1. The polypeptide is Fibrinogen silencer-binding protein (Fsbp) (Mus musculus (Mouse)).